The primary structure comprises 298 residues: Ribosomal RNA small subunit methyltransferase H (298 aa).

S-adenosyl-L-methionine contacts are provided by residues 46 to 48, aspartate 65, phenylalanine 92, aspartate 108, and histidine 115; that span reads GGH.

It belongs to the methyltransferase superfamily. RsmH family.

Its subcellular location is the cytoplasm. The enzyme catalyses cytidine(1402) in 16S rRNA + S-adenosyl-L-methionine = N(4)-methylcytidine(1402) in 16S rRNA + S-adenosyl-L-homocysteine + H(+). Functionally, specifically methylates the N4 position of cytidine in position 1402 (C1402) of 16S rRNA. This is Ribosomal RNA small subunit methyltransferase H from Nostoc punctiforme (strain ATCC 29133 / PCC 73102).